We begin with the raw amino-acid sequence, 392 residues long: Leucine aminopeptidase 1 (392 aa).

The signal sequence occupies residues 1–18 (MKFSQASLLAACLPAISA). A propeptide spanning residues 19–82 (RFIETAEADN…LGSTRLNAQT (64 aa)) is cleaved from the precursor. Asparagine 174 carries N-linked (GlcNAc...) asparagine glycosylation. The Zn(2+) site is built by histidine 182, aspartate 201, glutamate 240, and aspartate 267. Cysteine 316 and cysteine 320 are disulfide-bonded. Histidine 349 provides a ligand contact to Zn(2+).

It belongs to the peptidase M28 family. M28E subfamily. As to quaternary structure, monomer. It depends on Zn(2+) as a cofactor.

The protein resides in the secreted. Extracellular aminopeptidase that allows assimilation of proteinaceous substrates. The chain is Leucine aminopeptidase 1 (LAP1) from Fusarium vanettenii (strain ATCC MYA-4622 / CBS 123669 / FGSC 9596 / NRRL 45880 / 77-13-4) (Fusarium solani subsp. pisi).